The sequence spans 117 residues: Ig heavy chain V region MOO (117 aa).

The region spanning 1–116 (EVKLVESGGD…FGQGTIVTVS (116 aa)) is the Ig-like domain.

The sequence is that of Ig heavy chain V region MOO from Canis lupus familiaris (Dog).